The chain runs to 441 residues: Protein C-ets-1 (441 aa).

N6-acetyllysine; alternate occurs at positions 8 and 15. Glycyl lysine isopeptide (Lys-Gly) (interchain with G-Cter in SUMO2); alternate cross-links involve residues K8 and K15. K15 is covalently cross-linked (Glycyl lysine isopeptide (Lys-Gly) (interchain with G-Cter in SUMO); alternate). Position 38 is a phosphothreonine; by MAPK (T38). Residues 51–136 form the PNT domain; it reads ATFSGFTKEQ…EHLEILQKED (86 aa). The tract at residues 130–243 is activation domain; required for transcription activation; it reads EILQKEDVKP…DNMCMGRASR (114 aa). Residue K138 forms a Glycyl lysine isopeptide (Lys-Gly) (interchain with G-Cter in SUMO2) linkage. Position 223 is a phosphotyrosine (Y223). A Glycyl lysine isopeptide (Lys-Gly) (interchain with G-Cter in SUMO) cross-link involves residue K227. A phosphoserine mark is found at S251 and S254. At T265 the chain carries Phosphothreonine. S267, S270, S282, and S285 each carry phosphoserine. The tract at residues 304 to 312 is helix HI-1; the sequence is FKDYVRDRA. K305 is modified (N6-acetyllysine). The segment at 323-330 is helix HI-2; sequence AAALAGYT. Residues 335–415 constitute a DNA-binding region (ETS); it reads IQLWQFLLEL…AGKRYVYRFV (81 aa). The interval 418-422 is helix H4; sequence LQSLL. Residues 426-432 are helix H5; that stretch reads PEELHAM.

Belongs to the ETS family. Binds DNA as a homodimer; homodimerization is required for transcription activation. Interacts with MAF and MAFB. Interacts with PAX5; the interaction alters DNA-binding properties. Interacts with DAXX. Interacts with UBE2I. Interacts with SP100; the interaction is direct and modulates ETS1 transcriptional activity. Sumoylated on Lys-15 and Lys-227, preferentially with SUMO2; which inhibits transcriptional activity. Post-translationally, ubiquitinated; which induces proteasomal degradation. In terms of processing, phosphorylation at Ser-251, Ser-282 and Ser-285 by CaMK2/CaMKII in response to calcium signaling decreases affinity for DNA: an increasing number of phosphoserines causes DNA-binding to become progressively weaker.

The protein resides in the nucleus. The protein localises to the cytoplasm. With respect to regulation, autoinhibited by a module composed of four alpha helices (HI-1, HI-2, H4, and H5) that flank the DNA-binding ETS domain, reducing the affinity for DNA. Phosphorylation by CaMK2/CaMKII in response to calcium signaling decreases affinity for DNA. Its function is as follows. Transcription factor. Directly controls the expression of cytokine and chemokine genes in a wide variety of different cellular contexts. May control the differentiation, survival and proliferation of lymphoid cells. May also regulate angiogenesis through regulation of expression of genes controlling endothelial cell migration and invasion. In Rattus norvegicus (Rat), this protein is Protein C-ets-1 (Ets1).